Consider the following 560-residue polypeptide: uncharacterized protein (560 aa).

A DNA-binding region (zn(2)-C6 fungal-type) is located at residues 18 to 44; the sequence is CLRCRRRKVKCDRQYPCSRCKESEESC. Positions 60–80 are disordered; that stretch reads LSRPITRETDSSAHQETRTRL. Residues 64-80 are compositionally biased toward basic and acidic residues; sequence ITRETDSSAHQETRTRL. Residues 182–202 traverse the membrane as a helical segment; sequence FATSIILIVTAIAVALSLESF.

It localises to the nucleus membrane. This is an uncharacterized protein from Schizosaccharomyces pombe (strain 972 / ATCC 24843) (Fission yeast).